The sequence spans 341 residues: HTH-type transcriptional repressor PurR (341 aa).

The 55-residue stretch at 2-56 (ATIKDVAKRANVSTTTVSHVINKTRFVAEETRNAVWAAIKELHYSPSAVARSLKV) folds into the HTH lacI-type domain. A DNA-binding region (H-T-H motif) is located at residues 4-23 (IKDVAKRANVSTTTVSHVIN). A DNA-binding region spans residues 48 to 56 (SAVARSLKV). Hypoxanthine is bound by residues Y73, R190, T192, F221, and D275.

Homodimer.

It participates in purine metabolism; purine nucleotide biosynthesis [regulation]. Is the main repressor of the genes involved in the de novo synthesis of purine nucleotides, regulating purB, purC, purEK, purF, purHD, purL, purMN and guaBA expression. PurR is allosterically activated to bind its cognate DNA by binding the purine corepressors, hypoxanthine or guanine, thereby effecting transcription repression. This chain is HTH-type transcriptional repressor PurR, found in Escherichia coli (strain UTI89 / UPEC).